Here is a 306-residue protein sequence, read N- to C-terminus: Pantothenate kinase (306 aa).

91 to 98 (GSVAVGKS) is a binding site for ATP.

Belongs to the prokaryotic pantothenate kinase family.

It is found in the cytoplasm. The enzyme catalyses (R)-pantothenate + ATP = (R)-4'-phosphopantothenate + ADP + H(+). The protein operates within cofactor biosynthesis; coenzyme A biosynthesis; CoA from (R)-pantothenate: step 1/5. This chain is Pantothenate kinase, found in Streptococcus equi subsp. zooepidemicus (strain MGCS10565).